A 250-amino-acid polypeptide reads, in one-letter code: 2,3-bisphosphoglycerate-dependent phosphoglycerate mutase (250 aa).

Substrate contacts are provided by residues 10–17 (RHGESQWN), 23–24 (TG), arginine 62, 89–92 (ERHY), lysine 100, 116–117 (RR), and 185–186 (GN). The Tele-phosphohistidine intermediate role is filled by histidine 11. The active-site Proton donor/acceptor is glutamate 89.

This sequence belongs to the phosphoglycerate mutase family. BPG-dependent PGAM subfamily. In terms of assembly, homodimer.

The enzyme catalyses (2R)-2-phosphoglycerate = (2R)-3-phosphoglycerate. The protein operates within carbohydrate degradation; glycolysis; pyruvate from D-glyceraldehyde 3-phosphate: step 3/5. Catalyzes the interconversion of 2-phosphoglycerate and 3-phosphoglycerate. The sequence is that of 2,3-bisphosphoglycerate-dependent phosphoglycerate mutase from Escherichia coli O139:H28 (strain E24377A / ETEC).